The chain runs to 590 residues: CTP synthase (590 aa).

Residues M1–L281 form an amidoligase domain region. Residue S23 coordinates CTP. UTP is bound at residue S23. Residues S24–L29 and D81 each bind ATP. Residues D81 and E155 each contribute to the Mg(2+) site. CTP is bound by residues D162–E164, K202–Q207, and K238. UTP-binding positions include K202–Q207 and K238. Residues R306–A554 form the Glutamine amidotransferase type-1 domain. G369 is a binding site for L-glutamine. The active-site Nucleophile; for glutamine hydrolysis is the C396. L-glutamine-binding positions include L397 to Q400, E419, and R480. Active-site residues include H527 and E529.

Belongs to the CTP synthase family. As to quaternary structure, homotetramer.

The catalysed reaction is UTP + L-glutamine + ATP + H2O = CTP + L-glutamate + ADP + phosphate + 2 H(+). It catalyses the reaction L-glutamine + H2O = L-glutamate + NH4(+). The enzyme catalyses UTP + NH4(+) + ATP = CTP + ADP + phosphate + 2 H(+). The protein operates within pyrimidine metabolism; CTP biosynthesis via de novo pathway; CTP from UDP: step 2/2. With respect to regulation, allosterically activated by GTP, when glutamine is the substrate; GTP has no effect on the reaction when ammonia is the substrate. The allosteric effector GTP functions by stabilizing the protein conformation that binds the tetrahedral intermediate(s) formed during glutamine hydrolysis. Inhibited by the product CTP, via allosteric rather than competitive inhibition. Functionally, catalyzes the ATP-dependent amination of UTP to CTP with either L-glutamine or ammonia as the source of nitrogen. Regulates intracellular CTP levels through interactions with the four ribonucleotide triphosphates. This chain is CTP synthase, found in Mycolicibacterium smegmatis (strain ATCC 700084 / mc(2)155) (Mycobacterium smegmatis).